Consider the following 512-residue polypeptide: MFQVPSAGEIQELIGALKTGASAFVPEIFLSGLFLLVVTIDLFRIPSKRTIIPAVSVIGLIISGYFVYLQHAIPPDEFFLGMYAVDPFAIFFKYLFIVSGVFAVLISIDSVEVNLPESRSLGEYYSLIVAMVLGMFLMASSTDLLMMFLSLEMVSIISYILVGYLKGQVRSSEAGLKYVIYGSVSSGLMIYGFSIIYGLTGETNIFAINEFLKHNEVDSITLMLGSLLILGGFGYKAGVVPFHFWSPDVYEGAPTPITAYLSVGSKAAGFAMLIRFFRVTIPTGAGSTDLLAFDWVTLLSVVSVVSMVLGNVVALWQSNVKRLLAYSSIAHAGYILLGVIVADDLGTQATLFYLAAYTIMNIGAFFVIILISNEIGSDDVNDYKGLGKKMPLAAASLTIFLVSLTGLPPTVGFIGKLMIFSALLAKGPVFVWLAVIGVLTSVVSLYFYFKIPLNMYLRESEDGSETEFNVGMLSNALVAFLMILTVVFGLYFTPLSVLAEESVKIIGAVVMN.

A run of 14 helical transmembrane segments spans residues 23–43 (AFVP…IDLF), 50–70 (TIIP…VYLQ), 88–108 (FAIF…LISI), 120–140 (SLGE…LMAS), 144–164 (LLMM…LVGY), 179–199 (VIYG…IYGL), 220–240 (ITLM…AGVV), 254–274 (PTPI…AMLI), 295–315 (WVTL…VVAL), 323–343 (LLAY…IVAD), 351–371 (LFYL…IILI), 394–414 (AASL…VGFI), 429–449 (VFVW…YFYF), and 477–497 (LVAF…PLSV).

It belongs to the complex I subunit 2 family. As to quaternary structure, NDH-1 is composed of 14 different subunits. Subunits NuoA, H, J, K, L, M, N constitute the membrane sector of the complex.

Its subcellular location is the cell inner membrane. The enzyme catalyses a quinone + NADH + 5 H(+)(in) = a quinol + NAD(+) + 4 H(+)(out). Its function is as follows. NDH-1 shuttles electrons from NADH, via FMN and iron-sulfur (Fe-S) centers, to quinones in the respiratory chain. The immediate electron acceptor for the enzyme in this species is believed to be a menaquinone. Couples the redox reaction to proton translocation (for every two electrons transferred, four hydrogen ions are translocated across the cytoplasmic membrane), and thus conserves the redox energy in a proton gradient. The sequence is that of NADH-quinone oxidoreductase subunit N 2 from Chloroherpeton thalassium (strain ATCC 35110 / GB-78).